Reading from the N-terminus, the 529-residue chain is Plexin domain-containing protein 2 (529 aa).

A signal peptide spans Met-1–Gly-30. At Lys-31–Ala-454 the chain is on the extracellular side. The interval Ala-80–Asn-104 is disordered. N-linked (GlcNAc...) asparagine glycosylation is found at Asn-103 and Asn-160. The PSI domain occupies Thr-327–Pro-372. Residues Gly-455–Val-475 traverse the membrane as a helical segment. Topologically, residues Tyr-476–Cys-529 are cytoplasmic. Position 506 is a phosphoserine (Ser-506).

Belongs to the plexin family. As to quaternary structure, interacts with CTTN. As to expression, expressed in the endothelial cells of the stroma but not in the endothelial cells of normal colonic tissue.

Its subcellular location is the membrane. May play a role in tumor angiogenesis. This chain is Plexin domain-containing protein 2 (PLXDC2), found in Homo sapiens (Human).